The sequence spans 353 residues: Small ribosomal subunit biogenesis GTPase RsgA (353 aa).

Positions Met-1–Asn-17 are enriched in polar residues. The segment at Met-1–Thr-25 is disordered. Residues Ala-104–Phe-274 enclose the CP-type G domain. GTP is bound by residues Asn-160–Asp-163 and Gly-214–Ser-222. Zn(2+) contacts are provided by Cys-298, Cys-303, His-305, and Cys-311.

This sequence belongs to the TRAFAC class YlqF/YawG GTPase family. RsgA subfamily. As to quaternary structure, monomer. Associates with 30S ribosomal subunit, binds 16S rRNA. Requires Zn(2+) as cofactor.

Its subcellular location is the cytoplasm. Functionally, one of several proteins that assist in the late maturation steps of the functional core of the 30S ribosomal subunit. Helps release RbfA from mature subunits. May play a role in the assembly of ribosomal proteins into the subunit. Circularly permuted GTPase that catalyzes slow GTP hydrolysis, GTPase activity is stimulated by the 30S ribosomal subunit. The sequence is that of Small ribosomal subunit biogenesis GTPase RsgA from Klebsiella pneumoniae (strain 342).